The primary structure comprises 341 residues: Glyceraldehyde-3-phosphate dehydrogenase (341 aa).

NAD(+)-binding positions include 11 to 12 (TI) and Gly-110. Residue 139–141 (SCN) coordinates D-glyceraldehyde 3-phosphate. Cys-140 functions as the Nucleophile in the catalytic mechanism. Arg-168 contacts NAD(+). 194–195 (HG) serves as a coordination point for D-glyceraldehyde 3-phosphate. Gln-302 is an NAD(+) binding site.

The protein belongs to the glyceraldehyde-3-phosphate dehydrogenase family. As to quaternary structure, homotetramer.

The protein resides in the cytoplasm. The enzyme catalyses D-glyceraldehyde 3-phosphate + phosphate + NADP(+) = (2R)-3-phospho-glyceroyl phosphate + NADPH + H(+). It catalyses the reaction D-glyceraldehyde 3-phosphate + phosphate + NAD(+) = (2R)-3-phospho-glyceroyl phosphate + NADH + H(+). It participates in carbohydrate degradation; glycolysis; pyruvate from D-glyceraldehyde 3-phosphate: step 1/5. This chain is Glyceraldehyde-3-phosphate dehydrogenase, found in Methanoculleus marisnigri (strain ATCC 35101 / DSM 1498 / JR1).